The following is a 264-amino-acid chain: ATP synthase subunit a (264 aa).

The next 6 membrane-spanning stretches (helical) occupy residues 29 to 49, 90 to 110, 134 to 154, 177 to 197, 208 to 228, and 235 to 255; these read TWHI…LWLF, IAPL…MDMI, DLNI…YYSI, IPVN…SLAL, LIFI…ALGV, and LIFH…LTIV.

The protein belongs to the ATPase A chain family. As to quaternary structure, F-type ATPases have 2 components, CF(1) - the catalytic core - and CF(0) - the membrane proton channel. CF(1) has five subunits: alpha(3), beta(3), gamma(1), delta(1), epsilon(1). CF(0) has three main subunits: a(1), b(2) and c(9-12). The alpha and beta chains form an alternating ring which encloses part of the gamma chain. CF(1) is attached to CF(0) by a central stalk formed by the gamma and epsilon chains, while a peripheral stalk is formed by the delta and b chains.

It is found in the cell inner membrane. Key component of the proton channel; it plays a direct role in the translocation of protons across the membrane. The polypeptide is ATP synthase subunit a (Shewanella loihica (strain ATCC BAA-1088 / PV-4)).